Reading from the N-terminus, the 1108-residue chain is MSLLFLRRAKPLFVSCCSATHSRSSFLSPTLTNQLVRSFHGSRTMSESEKKILTEEELERKKKKEEKAKEKELKKQKALEKERLAELKAKQAKDGTNVPKKSAKKSSKRDASEENPEDFVDPETPLGERKRLSSQMAKQYSPATVEKSWYAWWEKSDLFKADAKSSKPPFVIVLPPPNVTGALHIGHALTSAIEDTIIRWKRMSGYNALWVPGVDHAGIATQVVVEKKIMRDRGMTRHDVGREEFVKEVWKWKNQYGGTILTQLRRLGASLDWSRECFTMDEQRSKAVTEAFVRLYKEGLIYRDIRLVNWDCILRTAISDVEVEYIDIKEKTLLKVPGYEKPVEFGLLTSFAYPLEGGLGEVIVATTRVETMLGDTAIAIHPDDARYKHLHGKFAVHPFNGRKLPIICDGILVDPNFGTGCVKITPAHDPNDCEVGKRHKLEFINIFTDDGKINTNGGSDFAGMPRFAAREAVVEALQKQGLYRGAKNNEMRLGLCSRTNDVIEPMIKPQWYVNCSMIGKEALDVAITDENKKLEFVPKQYTAEWRRWLENIRDWCISRQLWWGHRIPAWYATLEEDQLKEVGAYSDHWVVARTEDDAREEAAQKFLGKKFELTRDPDVLDTWFSSGLFPLSVLGWPDVTDDFKAFYPTSVLETGHDILFFWVARMVMMGMKLGGEVPFSKVYFHPMIRDAHGRKMSKSLGNVIDPLEVINGVTLEGLHKRLEEGNLDPKEVIVAKEGQVKDFPNGIPECGTDALRFALVSYTAQSDKINLDILRVVGYRQWCNKLWNAVRFAMMKLGDGYTPPQTLSPETMPFSCQWILSVLNKAISKTVVSLDAFEFSDAANTIYAWWQYQFCDVYIEAIKPYFAGDNPTFASERAHAQHALWISLETGLRLLHPFMPFVTEELWQRLPAPKDTERKASIMICDYPSAIENWSNEKVESEMDTVLATVKCMRALRAGLLEKQKNERLPAFALCENNVTSEIVKSHELEIRTLANLSSLEVVSKGQHAAPPGSSVETVNENLKVYLEVDGAINTEAEQEKIRNKIGELQKQKEKLQKMMSVSTYEEKVPANIKEDNANKLAKILQEFDFFEKESARLAAETSNSGNQ.

The transit peptide at 1–46 (MSLLFLRRAKPLFVSCCSATHSRSSFLSPTLTNQLVRSFHGSRTMS) directs the protein to the mitochondrion. Basic and acidic residues predominate over residues 57 to 93 (ELERKKKKEEKAKEKELKKQKALEKERLAELKAKQAK). Residues 57 to 138 (ELERKKKKEE…RKRLSSQMAK (82 aa)) form a disordered region. The 'HIGH' region signature appears at 177–187 (PNVTGALHIGH). A 'KMSKS' region motif is present at residues 695–699 (KMSKS). Residue Lys-698 participates in ATP binding. The stretch at 1032–1064 (AINTEAEQEKIRNKIGELQKQKEKLQKMMSVST) forms a coiled coil.

Belongs to the class-I aminoacyl-tRNA synthetase family.

The protein resides in the mitochondrion. The protein localises to the cytoplasm. Its subcellular location is the cytosol. The catalysed reaction is tRNA(Val) + L-valine + ATP = L-valyl-tRNA(Val) + AMP + diphosphate. Functionally, required for embryo development and seed viability. The protein is Valine--tRNA ligase, mitochondrial 1 of Arabidopsis thaliana (Mouse-ear cress).